A 505-amino-acid polypeptide reads, in one-letter code: tRNA-2-methylthio-N(6)-dimethylallyladenosine synthase (505 aa).

Residues 14–132 form the MTTase N-terminal domain; the sequence is RTYEVRTYGC…LPVLLERARV (119 aa). Positions 23, 61, 95, 169, 173, and 176 each coordinate [4Fe-4S] cluster. A Radical SAM core domain is found at 155 to 386; that stretch reads RESAYAAWVS…ALQEEISWEE (232 aa). Residues 388–456 form the TRAM domain; it reads KKQVGRTLEL…PHHLLAEGPV (69 aa).

Belongs to the methylthiotransferase family. MiaB subfamily. In terms of assembly, monomer. [4Fe-4S] cluster serves as cofactor.

The protein localises to the cytoplasm. It catalyses the reaction N(6)-dimethylallyladenosine(37) in tRNA + (sulfur carrier)-SH + AH2 + 2 S-adenosyl-L-methionine = 2-methylsulfanyl-N(6)-dimethylallyladenosine(37) in tRNA + (sulfur carrier)-H + 5'-deoxyadenosine + L-methionine + A + S-adenosyl-L-homocysteine + 2 H(+). Its function is as follows. Catalyzes the methylthiolation of N6-(dimethylallyl)adenosine (i(6)A), leading to the formation of 2-methylthio-N6-(dimethylallyl)adenosine (ms(2)i(6)A) at position 37 in tRNAs that read codons beginning with uridine. The polypeptide is tRNA-2-methylthio-N(6)-dimethylallyladenosine synthase (Streptomyces viridosporus (strain ATCC 14672 / DSM 40746 / JCM 4963 / KCTC 9882 / NRRL B-12104 / FH 1290) (Streptomyces ghanaensis)).